Consider the following 364-residue polypeptide: DNA replication and repair protein RecF (364 aa).

30-37 (GNNAQGKT) serves as a coordination point for ATP.

The protein belongs to the RecF family.

The protein resides in the cytoplasm. Functionally, the RecF protein is involved in DNA metabolism; it is required for DNA replication and normal SOS inducibility. RecF binds preferentially to single-stranded, linear DNA. It also seems to bind ATP. This is DNA replication and repair protein RecF from Clostridium botulinum (strain Okra / Type B1).